Here is a 115-residue protein sequence, read N- to C-terminus: Hydrogenase maturation factor HypA (115 aa).

Residue H2 participates in Ni(2+) binding. Residues C73, C76, C89, and C92 each contribute to the Zn(2+) site.

It belongs to the HypA/HybF family.

Its function is as follows. Involved in the maturation of [NiFe] hydrogenases. Required for nickel insertion into the metal center of the hydrogenase. This chain is Hydrogenase maturation factor HypA, found in Polaromonas naphthalenivorans (strain CJ2).